A 308-amino-acid polypeptide reads, in one-letter code: tRNA pseudouridine synthase B (308 aa).

The Nucleophile role is filled by Asp47.

It belongs to the pseudouridine synthase TruB family. Type 1 subfamily.

The enzyme catalyses uridine(55) in tRNA = pseudouridine(55) in tRNA. Functionally, responsible for synthesis of pseudouridine from uracil-55 in the psi GC loop of transfer RNAs. The chain is tRNA pseudouridine synthase B from Xanthomonas euvesicatoria pv. vesicatoria (strain 85-10) (Xanthomonas campestris pv. vesicatoria).